The primary structure comprises 144 residues: Nucleoside diphosphate kinase (144 aa).

Positions 11, 59, 87, 93, 104, and 114 each coordinate ATP. H117 functions as the Pros-phosphohistidine intermediate in the catalytic mechanism.

The protein belongs to the NDK family. As to quaternary structure, homotetramer. The cofactor is Mg(2+).

Its subcellular location is the cytoplasm. The enzyme catalyses a 2'-deoxyribonucleoside 5'-diphosphate + ATP = a 2'-deoxyribonucleoside 5'-triphosphate + ADP. The catalysed reaction is a ribonucleoside 5'-diphosphate + ATP = a ribonucleoside 5'-triphosphate + ADP. Its function is as follows. Major role in the synthesis of nucleoside triphosphates other than ATP. The ATP gamma phosphate is transferred to the NDP beta phosphate via a ping-pong mechanism, using a phosphorylated active-site intermediate. The polypeptide is Nucleoside diphosphate kinase (Psychromonas ingrahamii (strain DSM 17664 / CCUG 51855 / 37)).